Consider the following 175-residue polypeptide: Crossover junction endodeoxyribonuclease RuvC (175 aa).

Residues aspartate 12, glutamate 72, and aspartate 144 contribute to the active site. Mg(2+)-binding residues include aspartate 12, glutamate 72, and aspartate 144.

This sequence belongs to the RuvC family. Homodimer which binds Holliday junction (HJ) DNA. The HJ becomes 2-fold symmetrical on binding to RuvC with unstacked arms; it has a different conformation from HJ DNA in complex with RuvA. In the full resolvosome a probable DNA-RuvA(4)-RuvB(12)-RuvC(2) complex forms which resolves the HJ. It depends on Mg(2+) as a cofactor.

It localises to the cytoplasm. It catalyses the reaction Endonucleolytic cleavage at a junction such as a reciprocal single-stranded crossover between two homologous DNA duplexes (Holliday junction).. The RuvA-RuvB-RuvC complex processes Holliday junction (HJ) DNA during genetic recombination and DNA repair. Endonuclease that resolves HJ intermediates. Cleaves cruciform DNA by making single-stranded nicks across the HJ at symmetrical positions within the homologous arms, yielding a 5'-phosphate and a 3'-hydroxyl group; requires a central core of homology in the junction. The consensus cleavage sequence is 5'-(A/T)TT(C/G)-3'. Cleavage occurs on the 3'-side of the TT dinucleotide at the point of strand exchange. HJ branch migration catalyzed by RuvA-RuvB allows RuvC to scan DNA until it finds its consensus sequence, where it cleaves and resolves the cruciform DNA. This Beijerinckia indica subsp. indica (strain ATCC 9039 / DSM 1715 / NCIMB 8712) protein is Crossover junction endodeoxyribonuclease RuvC.